A 229-amino-acid polypeptide reads, in one-letter code: Putative germin-like protein 12-4 (229 aa).

The first 22 residues, 1–22, serve as a signal peptide directing secretion; that stretch reads MAASNFFLLTAFIALVATQAMA. The cysteines at positions 32 and 47 are disulfide-linked. The Cupin type-1 domain maps to 62 to 217; sequence ANLDKPMDTT…AFQVDKKAMD (156 aa). A glycan (N-linked (GlcNAc...) asparagine) is linked at N78. H111, H113, E118, and H162 together coordinate Mn(2+).

It belongs to the germin family. As to quaternary structure, oligomer (believed to be a pentamer but probably hexamer).

It is found in the secreted. It localises to the extracellular space. The protein localises to the apoplast. Functionally, may play a role in plant defense. Probably has no oxalate oxidase activity even if the active site is conserved. The chain is Putative germin-like protein 12-4 from Oryza sativa subsp. japonica (Rice).